Consider the following 667-residue polypeptide: Soluble guanylate cyclase 89Da (667 aa).

Heme is bound at residue H104. The interval 337 to 364 is disordered; sequence AQEFSESHPVDDDESAREDEIDPATGER. The span at 347-358 shows a compositional bias: acidic residues; the sequence is DDDESAREDEID. Positions 427–455 form a coiled coil; that stretch reads QHCSKLEIMFEKEEQRSDELEKSLELADS. Residues 491 to 617 enclose the Guanylate cyclase domain; sequence SVIFLEVMNV…DTVNTASRME (127 aa).

The protein belongs to the adenylyl cyclase class-4/guanylyl cyclase family. In terms of assembly, heterodimer; with Gyc88E, in the presence of magnesium or manganese. The cofactor is heme.

It localises to the cytoplasm. The catalysed reaction is GTP = 3',5'-cyclic GMP + diphosphate. Its activity is regulated as follows. Probably not activated by nitric oxide (NO). Heterodimer also exhibits some stimulation, some compounds (SIN-1 and two of the NONOates) that were ineffective at stimulating Gyc-88E alone did stimulate the heterodimer. Functionally, heterodimers with Gyc-89Da and Gyc-89Db are activated in response to changing oxygen concentrations, alerting flies to hypoxic environments. Under normal oxygen concentrations, oxygen binds to the heme group and results in low levels of guanylyl cyclase activity. When exposed to reduced oxygen concentrations, the oxygen dissociates from the heme group resulting in activation of the enzyme. This is Soluble guanylate cyclase 89Da from Drosophila melanogaster (Fruit fly).